A 342-amino-acid polypeptide reads, in one-letter code: Dihydroorotase (342 aa).

H13 and H15 together coordinate Zn(2+). Residues H15–R17 and N41 contribute to the substrate site. Zn(2+) is bound by residues K98, H135, and H173. K98 bears the N6-carboxylysine mark. A substrate-binding site is contributed by H135. Residue L218 participates in substrate binding. D246 serves as a coordination point for Zn(2+). The active site involves D246. Substrate is bound by residues H250 and A262.

This sequence belongs to the metallo-dependent hydrolases superfamily. DHOase family. Class II DHOase subfamily. Homodimer. Zn(2+) is required as a cofactor.

The enzyme catalyses (S)-dihydroorotate + H2O = N-carbamoyl-L-aspartate + H(+). It functions in the pathway pyrimidine metabolism; UMP biosynthesis via de novo pathway; (S)-dihydroorotate from bicarbonate: step 3/3. Functionally, catalyzes the reversible cyclization of carbamoyl aspartate to dihydroorotate. The sequence is that of Dihydroorotase from Aliivibrio fischeri (strain ATCC 700601 / ES114) (Vibrio fischeri).